A 177-amino-acid polypeptide reads, in one-letter code: Large ribosomal subunit protein uL6 (177 aa).

Belongs to the universal ribosomal protein uL6 family. In terms of assembly, part of the 50S ribosomal subunit.

This protein binds to the 23S rRNA, and is important in its secondary structure. It is located near the subunit interface in the base of the L7/L12 stalk, and near the tRNA binding site of the peptidyltransferase center. In Halorhodospira halophila (strain DSM 244 / SL1) (Ectothiorhodospira halophila (strain DSM 244 / SL1)), this protein is Large ribosomal subunit protein uL6.